The sequence spans 201 residues: Molybdenum cofactor guanylyltransferase (201 aa).

Residues 14 to 16 (LAG), Lys-31, and Asp-104 contribute to the GTP site. Asp-104 contributes to the Mg(2+) binding site.

Belongs to the MobA family. As to quaternary structure, monomer. Requires Mg(2+) as cofactor.

It is found in the cytoplasm. It catalyses the reaction Mo-molybdopterin + GTP + H(+) = Mo-molybdopterin guanine dinucleotide + diphosphate. Its function is as follows. Transfers a GMP moiety from GTP to Mo-molybdopterin (Mo-MPT) cofactor (Moco or molybdenum cofactor) to form Mo-molybdopterin guanine dinucleotide (Mo-MGD) cofactor. In Helicobacter pylori (strain ATCC 700392 / 26695) (Campylobacter pylori), this protein is Molybdenum cofactor guanylyltransferase.